The chain runs to 562 residues: Protein KASH5 (562 aa).

Residues 1–521 (MDLPEGPVGG…PQRLRVTRHP (521 aa)) are Cytoplasmic-facing. The tract at residues 125 to 153 (ALTSRQLPSGCPEAEEPANLESFGGEDPR) is disordered. Residues 164–349 (SSLEDLELSN…LEEQLSQTYE (186 aa)) are a coiled coil. The segment at 407-481 (ETSEETEFPS…DIPENPPERP (75 aa)) is disordered. Residues 431 to 448 (AHPEEGRKEPSMWLTRRE) are compositionally biased toward basic and acidic residues. A helical; Anchor for type IV membrane protein membrane pass occupies residues 522 to 542 (LIPAPVLGLLLLLLLSVLLLG). Residues 541–562 (LGPSPPPTWPHLQLCYLQPPPV) are interaction with SUN1. The Perinuclear space segment spans residues 543–562 (PSPPPTWPHLQLCYLQPPPV).

In terms of assembly, core component the LINC complex which is composed of inner nuclear membrane SUN domain-containing proteins coupled to outer nuclear membrane KASH domain-containing nesprins. SUN and KASH domain-containing proteins seem to bind each other promiscuously; however, differentially expression of LINC complex constituents is giving rise to specific assemblies. At least SUN1/2-containing core LINC complexes are proposed to be hexameric composed of three protomers of each KASH and SUN domain-containing protein. Interacts with SUN1; this interaction mediates its telomere localization by forming a SUN1:KASH5 LINC complex. Component of a probable SUN2:KASH5 LINC complex. Self-associates. Interacts with DYNC1H1, DCTN1, DYNC1I1/2 and PAFAH1B1; suggesting the association with the dynein-dynactin motor complex. As to expression, expressed in testis (at protein level).

It localises to the nucleus outer membrane. The protein resides in the nucleus. It is found in the chromosome. Its subcellular location is the telomere. The protein localises to the nucleus envelope. Its function is as follows. As a component of the LINC (LInker of Nucleoskeleton and Cytoskeleton) complex, involved in the connection between the nuclear lamina and the cytoskeleton. The nucleocytoplasmic interactions established by the LINC complex play an important role in the transmission of mechanical forces across the nuclear envelope and in nuclear movement and positioning. Required for telomere attachment to nuclear envelope in the prophase of meiosis. Required for rapid telomere prophase movements implicating a SUN1/2:KASH5 LINC complex in which SUN1 and SUN2 seem to act at least partial redundantly. Required for homolog pairing during meiotic prophase in spermatocytes and probably oocytes. Essential for male and female gametogenesis. Recruits cytoplasmic dynein to telomere attachment sites at the nuclear envelope in spermatocytes. In oocytes is involved in meiotic resumption and spindle formation. The polypeptide is Protein KASH5 (Homo sapiens (Human)).